Consider the following 491-residue polypeptide: FAD-dependent monooxygenase cle3 (491 aa).

FAD contacts are provided by glutamate 55, glycine 69, arginine 128, aspartate 330, and alanine 343. The N-linked (GlcNAc...) asparagine glycan is linked to asparagine 380. Residues 462–482 (STVVWTSLGILGLVVFLFLLF) form a helical membrane-spanning segment.

The protein belongs to the paxM FAD-dependent monooxygenase family. It depends on FAD as a cofactor.

It is found in the membrane. It functions in the pathway secondary metabolite biosynthesis; terpenoid biosynthesis. FAD-dependent monooxygenase; part of the cluster A that mediates the biosynthesis of chevalone E and its oxidized derivatives that possess a unique five-membered lactone ring and can synergistically enhance the cytotoxicity of doxorubicin (DOX) in breast cancer cells. Within the pathway, cle3 takes part to the biosynthesis of the molecular scaffold by catalyzing the formation of an (S)-epoxide ring at the terminal olefin of the geranylgeranyl group. The molecular scaffold is commonly biosynthesized by a series of enzymes including the non-reducing polyketide synthase (NR-PKS) cle1 that produces the alpha-pyrone triacetic acid lactone (TAL); The membrane-bound prenyltransferase cle5 that accepts TAL as its substrate to perform a C-3 geranylgeranylation reaction, in which the pathway-dedicated GGPS cle6 is required to provide GGPP, the other substrate of cle5; the FAD-dependent monooxygenase Cle3 that forms an (S)-epoxide ring at the terminal olefin of the geranylgeranyl group; and the terpene cyclase Cle7 that catalyzes the cyclization of the prenyl group that yields the pentacyclic pathway intermediate chevalone E. Chevalone E can derivatize into seven new oxidized analogs by the cytochrome P450 monooxygenases cle2 (acting at C-20) and cle4 (acting at C-11 and C-12). In Aspergillus versicolor, this protein is FAD-dependent monooxygenase cle3.